The primary structure comprises 86 residues: Large ribosomal subunit protein bL27 (86 aa).

Residues Met-1–Gly-22 are disordered.

The protein belongs to the bacterial ribosomal protein bL27 family.

In Rickettsia bellii (strain RML369-C), this protein is Large ribosomal subunit protein bL27.